The primary structure comprises 324 residues: Olfactory receptor 7G2 (324 aa).

Residues 1 to 25 lie on the Extracellular side of the membrane; it reads MEARNQTAISKFLLLGLIEDPELQP. The N-linked (GlcNAc...) asparagine glycan is linked to Asn-5. The helical transmembrane segment at 26–46 threads the bilayer; sequence VLFSLFLSMYLVTILGNLLIL. Residues 47–54 are Cytoplasmic-facing; that stretch reads LAVISDSH. The chain crosses the membrane as a helical span at residues 55–75; sequence LHTPMYFFLSNLSFLDICLST. The Extracellular segment spans residues 76-99; it reads TTIPKMLVNIQAQNRSITYSGCLT. An N-linked (GlcNAc...) asparagine glycan is attached at Asn-89. The cysteines at positions 97 and 189 are disulfide-linked. A helical transmembrane segment spans residues 100–120; sequence QICFVLFFAGLENCLLAAMAY. Residues 121-139 lie on the Cytoplasmic side of the membrane; it reads DRYVAICHPLRYTVIMNPR. The helical transmembrane segment at 140 to 160 threads the bilayer; it reads LCGLLILLSLLTSVVNALLLS. Residues 161–197 lie on the Extracellular side of the membrane; it reads LMVLRLSFCTDLEIPLFFCELAQVIQLTCSDTLINNI. A helical transmembrane segment spans residues 198-217; sequence LIYFAACIFGGVPLSGIILS. Residues 218–237 are Cytoplasmic-facing; the sequence is YTQITSCVLRMPSASGKHKA. The chain crosses the membrane as a helical span at residues 238–258; it reads VSTCGSHLSIVLLFYGAGLGV. The Extracellular portion of the chain corresponds to 259 to 271; it reads YISSVVTDSPRKT. Residues 272–292 traverse the membrane as a helical segment; sequence AVASVMYSVFPQMVNPFIYSL. Residues 293–324 are Cytoplasmic-facing; sequence RNKDMKGTLRKFIGRIPSLLWCAICFGFRFLE.

This sequence belongs to the G-protein coupled receptor 1 family.

It localises to the cell membrane. In terms of biological role, odorant receptor. This chain is Olfactory receptor 7G2 (OR7G2), found in Homo sapiens (Human).